The sequence spans 694 residues: MATEQEFTRASRFSRDSSSVGYYSEEDNTEEEDEEEEEMEEIEEEEEEEEEEDPRIGLTCGGRRNGSSNNNKWMMLGRILDPRSKWVREWNKVFLLVCATGLFVDPLFLYTLSVSDTCMCLLVDGWLALTVTALRSMTDLLHLWNIWIQFKIARRWPYPGGDSDGDTNKGGGTRGSTRVAPPYVKKNGFFFDLFVILPLPQVVLWVVIPSLLKRGSVTLVVSVLLVTFLFQYLPKIYHSIRHLRRNATLSGYIFGTVWWGIALNMIAYFVAAHAAGACWYLLGVQRSAKCLKEQCENTIGCDLRMLSCKEPVYYGTTVMVLDRARLAWAQNHQARSVCLDINTNYTYGAYQWTIQLVSSESRLEKILFPIFWGLMTLSTFGNLESTTEWSEVVFNIIVLTSGLLLVTMLIGNIKVFLHATTSKKQAMHLKMRNIEWWMKKRHLPIGFRQRVRNYERQRWAAMRGVDECEMVQNLPEGLRRDIKYHLCLDLVRQVPLFQHMDDLVLENICDRVKSLIFTKGETIQKEGDAVQRMLFVVRGHLQSSQLLRDGVKSCCMLGPGNFSGDELLSWCLRRPFVERLPPSSSTLVTLETTEAFGLDAEDVKYVTQHFRYTFVNEKVKRSARYYSPGWRTWAAVAVQLAWRRYKHRLTLTSLSFIRPRRPLSRCASLGEDKLRLYAAILTSPKPNPDDFDDY.

A compositionally biased stretch (basic and acidic residues) spans 1–15 (MATEQEFTRASRFSR). Residues 1 to 64 (MATEQEFTRA…RIGLTCGGRR (64 aa)) are disordered. Residues 1-92 (MATEQEFTRA…RSKWVREWNK (92 aa)) lie on the Cytoplasmic side of the membrane. Over residues 24–53 (SEEDNTEEEDEEEEEMEEIEEEEEEEEEED) the composition is skewed to acidic residues. Residues 93-113 (VFLLVCATGLFVDPLFLYTLS) form a helical membrane-spanning segment. At 114–126 (VSDTCMCLLVDGW) the chain is on the extracellular side. A helical membrane pass occupies residues 127-147 (LALTVTALRSMTDLLHLWNIW). Topologically, residues 148-187 (IQFKIARRWPYPGGDSDGDTNKGGGTRGSTRVAPPYVKKN) are cytoplasmic. Residues 188–208 (GFFFDLFVILPLPQVVLWVVI) form a helical membrane-spanning segment. Over 209 to 216 (PSLLKRGS) the chain is Extracellular. The chain crosses the membrane as a helical span at residues 217–237 (VTLVVSVLLVTFLFQYLPKIY). The Cytoplasmic portion of the chain corresponds to 238 to 251 (HSIRHLRRNATLSG). Residues 252-272 (YIFGTVWWGIALNMIAYFVAA) form a helical membrane-spanning segment. The Extracellular portion of the chain corresponds to 273–392 (HAAGACWYLL…LESTTEWSEV (120 aa)). A helical transmembrane segment spans residues 393–413 (VFNIIVLTSGLLLVTMLIGNI). Residues 414–694 (KVFLHATTSK…KPNPDDFDDY (281 aa)) are Cytoplasmic-facing. A nucleoside 3',5'-cyclic phosphate contacts are provided by residues 496-626 (LFQH…ARYY) and D565. Positions 610–626 (FRYTFVNEKVKRSARYY) are calmodulin-binding. Residues 631–660 (RTWAAVAVQLAWRRYKHRLTLTSLSFIRPR) form the IQ domain.

Belongs to the cyclic nucleotide-gated cation channel (TC 1.A.1.5) family. Homotetramer or heterotetramer.

Its subcellular location is the cell membrane. Acts as a cyclic nucleotide-gated ion channel. Permeable to potassium and sodium in a cyclic nucleotide-dependent fashion (cAMP or cGMP). Might constitute a common downstream component of the signaling pathways leading to hypersensitive response (HR). The polypeptide is Cyclic nucleotide-gated ion channel 4 (CNGC4) (Arabidopsis thaliana (Mouse-ear cress)).